The following is a 232-amino-acid chain: 5'-methylthioadenosine/S-adenosylhomocysteine nucleosidase (232 aa).

The Proton acceptor role is filled by Glu-14. Substrate contacts are provided by residues Gly-80, Val-154, and 175 to 176 (ME). The active-site Proton donor is Asp-199.

This sequence belongs to the PNP/UDP phosphorylase family. MtnN subfamily.

The enzyme catalyses S-adenosyl-L-homocysteine + H2O = S-(5-deoxy-D-ribos-5-yl)-L-homocysteine + adenine. The catalysed reaction is S-methyl-5'-thioadenosine + H2O = 5-(methylsulfanyl)-D-ribose + adenine. It carries out the reaction 5'-deoxyadenosine + H2O = 5-deoxy-D-ribose + adenine. It functions in the pathway amino-acid biosynthesis; L-methionine biosynthesis via salvage pathway; S-methyl-5-thio-alpha-D-ribose 1-phosphate from S-methyl-5'-thioadenosine (hydrolase route): step 1/2. Catalyzes the irreversible cleavage of the glycosidic bond in both 5'-methylthioadenosine (MTA) and S-adenosylhomocysteine (SAH/AdoHcy) to adenine and the corresponding thioribose, 5'-methylthioribose and S-ribosylhomocysteine, respectively. Also cleaves 5'-deoxyadenosine, a toxic by-product of radical S-adenosylmethionine (SAM) enzymes, into 5-deoxyribose and adenine. The chain is 5'-methylthioadenosine/S-adenosylhomocysteine nucleosidase from Haemophilus ducreyi (strain 35000HP / ATCC 700724).